Reading from the N-terminus, the 155-residue chain is MGLKLLESRLCLLLLLGLVLTLVSCQRPTPSQKFDIQHIYKKSSPKCDDAMRVVNKYTGKCKDLNTFLHTTFADVVRVCHNPPKTCKDGTSPNCHDSSSKVSVTICKLTKRARNYTHCRYKTTGAKKSYTVACNPRTPKDRPTYPVVPVHLDRLF.

The signal sequence occupies residues 1-25 (MGLKLLESRLCLLLLLGLVLTLVSC). Catalysis depends on His-38, which acts as the Proton acceptor. 4 disulfides stabilise this stretch: Cys-47-Cys-106, Cys-61-Cys-118, Cys-79-Cys-133, and Cys-86-Cys-94. A substrate-binding site is contributed by 62 to 66 (KDLNT). A glycan (N-linked (GlcNAc...) asparagine) is linked at Asn-114. His-150 serves as the catalytic Proton donor.

Belongs to the pancreatic ribonuclease family.

It catalyses the reaction an [RNA] containing cytidine + H2O = an [RNA]-3'-cytidine-3'-phosphate + a 5'-hydroxy-ribonucleotide-3'-[RNA].. It carries out the reaction an [RNA] containing uridine + H2O = an [RNA]-3'-uridine-3'-phosphate + a 5'-hydroxy-ribonucleotide-3'-[RNA].. In terms of biological role, this is a non-secretory ribonuclease. It is a pyrimidine specific nuclease with a slight preference for U. Cytotoxin and helminthotoxin. Possesses a wide variety of biological activities. The chain is Ribonuclease 2B from Mus musculus (Mouse).